A 125-amino-acid polypeptide reads, in one-letter code: UPF0102 protein CCNA_00142 (125 aa).

The protein belongs to the UPF0102 family.

The protein is UPF0102 protein CCNA_00142 of Caulobacter vibrioides (strain NA1000 / CB15N) (Caulobacter crescentus).